Consider the following 666-residue polypeptide: Chaperone protein dnaK1 (666 aa).

Thr198 carries the phosphothreonine; by autocatalysis modification.

It belongs to the heat shock protein 70 family.

Acts as a chaperone. This is Chaperone protein dnaK1 (dnaK1) from Prochlorococcus marinus (strain SARG / CCMP1375 / SS120).